We begin with the raw amino-acid sequence, 291 residues long: Meiosis-specific protein SPO13 (291 aa).

Disordered stretches follow at residues 1 to 30, 116 to 143, and 271 to 291; these read MAPRKRFRLLELGSPTHSKRKVQKPLQEKT, SFDNSLRFEDIEQPPKSTSTPVLSQSSQ, and CSDYESSGQNATYNDSESSLN. The Nuclear localization signal motif lies at 3–6; sequence PRKR. The segment covering 116–125 has biased composition (basic and acidic residues); it reads SFDNSLRFED. The span at 130–143 shows a compositional bias: polar residues; sequence PKSTSTPVLSQSSQ.

Its subcellular location is the nucleus. Functionally, required for meiosis I segmentation. Probably acts as a regulator of kinetochore function during meiosis I: required both for mono-orientation of kinetochores on sister chromosomes and protection of centromeric cohesin from separase-mediated cleavage. The chain is Meiosis-specific protein SPO13 (SPO13) from Saccharomyces cerevisiae (strain ATCC 204508 / S288c) (Baker's yeast).